The sequence spans 533 residues: Ribonuclease III domain-containing protein RNC1, chloroplastic (533 aa).

The N-terminal 30 residues, 1-30, are a transit peptide targeting the chloroplast; it reads MAPPAMAFQALALGPLPLPLPAARRRRRVR. Disordered stretches follow at residues 31 to 57 and 66 to 85; these read VLAV…NSPS and RKKA…ILKP. Residues 39 to 53 are compositionally biased toward pro residues; sequence TPPPPPSPSSPPEPA. The segment covering 69–82 has biased composition (basic residues); that stretch reads AVSPKKKHPPRRFI. RNase III domains follow at residues 164-279 and 411-511; these read LLYL…LCFG and EHPR…CVYG.

As to quaternary structure, interacts with RNA. Part of large ribonucleo-protein particles that contain CAF1 and/or CAF2.

It localises to the plastid. The protein localises to the chloroplast. Functionally, binds specific group II introns in chloroplasts and facilitates their splicing. Acts on both subgroup IIA and subgroup IIB introns. The substrates of the subgroup II also require the CRM domain proteins CAF1 or CAF2. Binds both single-stranded and double-stranded RNA non-specifically, but lacks endonuclease activity. Required for plastid ribosome biogenesis. This Oryza sativa subsp. japonica (Rice) protein is Ribonuclease III domain-containing protein RNC1, chloroplastic.